The primary structure comprises 61 residues: Small ribosomal subunit protein uS14B (61 aa).

Positions 24, 27, 40, and 43 each coordinate Zn(2+).

It belongs to the universal ribosomal protein uS14 family. Zinc-binding uS14 subfamily. Part of the 30S ribosomal subunit. Contacts proteins S3 and S10. Zn(2+) serves as cofactor.

In terms of biological role, binds 16S rRNA, required for the assembly of 30S particles and may also be responsible for determining the conformation of the 16S rRNA at the A site. The polypeptide is Small ribosomal subunit protein uS14B (Staphylococcus epidermidis (strain ATCC 35984 / DSM 28319 / BCRC 17069 / CCUG 31568 / BM 3577 / RP62A)).